The chain runs to 476 residues: Chromosomal replication initiator protein DnaA (476 aa).

Positions 1 to 75 (MLAPDTFWLA…TQMAENHFAR (75 aa)) are domain I, interacts with DnaA modulators. Residues 75-139 (RPVQLQLELA…AKEKQEKNPT (65 aa)) are domain II. The interval 110–141 (FDAPTESAQKAPKDTKDTKDAKEKQEKNPTRL) is disordered. The span at 120–138 (APKDTKDTKDAKEKQEKNP) shows a compositional bias: basic and acidic residues. The interval 140-356 (RLNPSFTFNT…GALKRVVAYS (217 aa)) is domain III, AAA+ region. Residues Gly-184, Gly-186, Lys-187, and Thr-188 each coordinate ATP. The tract at residues 357–476 (RFTGHALTLD…FNTLLHILRG (120 aa)) is domain IV, binds dsDNA.

This sequence belongs to the DnaA family. Oligomerizes as a right-handed, spiral filament on DNA at oriC.

The protein resides in the cytoplasm. Its function is as follows. Plays an essential role in the initiation and regulation of chromosomal replication. ATP-DnaA binds to the origin of replication (oriC) to initiate formation of the DNA replication initiation complex once per cell cycle. Binds the DnaA box (a 9 base pair repeat at the origin) and separates the double-stranded (ds)DNA. Forms a right-handed helical filament on oriC DNA; dsDNA binds to the exterior of the filament while single-stranded (ss)DNA is stabiized in the filament's interior. The ATP-DnaA-oriC complex binds and stabilizes one strand of the AT-rich DNA unwinding element (DUE), permitting loading of DNA polymerase. After initiation quickly degrades to an ADP-DnaA complex that is not apt for DNA replication. Binds acidic phospholipids. This is Chromosomal replication initiator protein DnaA from Nitrosospira multiformis (strain ATCC 25196 / NCIMB 11849 / C 71).